A 1010-amino-acid polypeptide reads, in one-letter code: Retinoblastoma-related protein 1 (1010 aa).

A disordered region spans residues 1–23; that stretch reads MEGAAPPASSGSEVTGAGSGKVD. The domain A stretch occupies residues 419 to 619; that stretch reads TPVSTAMTTA…EKGSSMYNSL (201 aa). Residues 419–861 are pocket; the sequence is TPVSTAMTTA…NEVFIPTVKP (443 aa). The interval 620 to 730 is spacer; that stretch reads IVARPTLSAE…PAAGGELCAE (111 aa). Residues 657–679 are disordered; it reads LPPLPFQKQEHSPDKDEVRSPKR. Positions 664-679 are enriched in basic and acidic residues; sequence KQEHSPDKDEVRSPKR. The tract at residues 731 to 861 is domain B; sequence TGIGVFLSKI…NEVFIPTVKP (131 aa). Residues 868-898 are disordered; it reads SGTSPNKKNEEKCAADGPYPESPRLSRFPNL.

It belongs to the retinoblastoma protein (RB) family.

Its subcellular location is the nucleus. Regulator of biological processes that recruits a histone deacetylase to control gene transcription. May play a role in the entry into mitosis, negatively regulating the cell proliferation. Formation of stable complexes with geminiviridae replication-associated proteins may create a cellular environment which favors viral DNA replication. In Oryza sativa subsp. japonica (Rice), this protein is Retinoblastoma-related protein 1 (RBR1).